Reading from the N-terminus, the 437-residue chain is Rhoptry apical surface protein 2 (437 aa).

Residues 45-179 (GCLGSLFFYL…PRINLSLHKL (135 aa)) form the C2 domain. In terms of domain architecture, PH spans 230–338 (EGPLERLNAN…FIEKLRAYRE (109 aa)). A disordered region spans residues 341–437 (STRVPSQKGA…SVVGDEEPQT (97 aa)). Residues 375 to 384 (RKSGGKKSRR) are compositionally biased toward basic residues.

In terms of assembly, interacts with RASP1. Interacts with RASP3.

Its subcellular location is the cytoplasmic vesicle. It localises to the secretory vesicle. It is found in the rhoptry membrane. Essential for tachyzoite invasion of host cells by controlling rhoptry secretion. Binds to phosphatidic acid (PA) and phosphatidylinositol 4,5-bisphosphate (PIP2) lipids and thus, likely contributes to the assembly of the machinery that docks or primes the rhoptry to the parasite cell membrane prior to the fusion with the host cell membrane. The protein is Rhoptry apical surface protein 2 of Toxoplasma gondii (strain ATCC 50853 / GT1).